Here is a 189-residue protein sequence, read N- to C-terminus: Photosystem I assembly protein Ycf4 (189 aa).

2 helical membrane-spanning segments follow: residues Ser-25–Leu-45 and Leu-62–Gly-82.

This sequence belongs to the Ycf4 family.

Its subcellular location is the cellular thylakoid membrane. Seems to be required for the assembly of the photosystem I complex. This Synechococcus sp. (strain JA-3-3Ab) (Cyanobacteria bacterium Yellowstone A-Prime) protein is Photosystem I assembly protein Ycf4.